The sequence spans 145 residues: Neutral phospholipase A2 homolog taipoxin beta chain 1 (145 aa).

Residues 1-27 (MHPAHLLVLLAVCVSLLGASDIPPLPL) form the signal peptide. Disulfide bonds link Cys38–Cys98, Cys54–Cys144, Cys56–Cys72, Cys71–Cys125, Cys78–Cys118, Cys87–Cys111, and Cys105–Cys116.

The protein belongs to the phospholipase A2 family. Group I subfamily. D49 sub-subfamily. Heterotrimer of alpha, beta, and gamma chains; non-covalently linked. As to expression, expressed by the venom gland.

The protein localises to the secreted. Its function is as follows. Heterotrimer: Snake venom phospholipase A2 (PLA2) heterotrimer that acts as a potent presynaptic neurotoxin by blocking synaptic transmission and synaptic vesicle recycling. May act by binding in a calcium-dependent fashion to neurotonal pentraxin-1 (NPTX1) and neurotonal pentraxin-2 (NPTX2), but not to neuronal pentraxin receptor (NPTXR). Also binds to taipoxin-associated calcium binding protein 49 (RCN2), a protein localized in the lumen of endoplasmic reticulum. In terms of biological role, monomer (beta chain): Snake venom phospholipase A2 homolog that is neither toxic nor enzymatically active. Does not bind calcium. This Oxyuranus scutellatus scutellatus (Australian taipan) protein is Neutral phospholipase A2 homolog taipoxin beta chain 1.